The primary structure comprises 88 residues: DNA-directed RNA polymerase subunit omega (88 aa).

The protein belongs to the RNA polymerase subunit omega family. In terms of assembly, the RNAP catalytic core consists of 2 alpha, 1 beta, 1 beta' and 1 omega subunit. When a sigma factor is associated with the core the holoenzyme is formed, which can initiate transcription.

The enzyme catalyses RNA(n) + a ribonucleoside 5'-triphosphate = RNA(n+1) + diphosphate. Its function is as follows. Promotes RNA polymerase assembly. Latches the N- and C-terminal regions of the beta' subunit thereby facilitating its interaction with the beta and alpha subunits. The polypeptide is DNA-directed RNA polymerase subunit omega (Thermobifida fusca (strain YX)).